A 182-amino-acid polypeptide reads, in one-letter code: IQ domain-containing protein F1 (182 aa).

Basic and acidic residues-rich tracts occupy residues 1 to 10 (MGEEQQKPEE) and 31 to 43 (ETEK…KQEL). The interval 1–43 (MGEEQQKPEELNAPTDDAPQEKQQPADLSSETEKAKSKKKQEL) is disordered. 2 IQ domains span residues 45 to 74 (EKDQ…SAWI) and 101 to 130 (EQWA…AVRT).

Interacts with calmodulin. As to expression, specifically expressed in testes and mature spermatozoa (at protein level).

The protein resides in the cytoplasmic vesicle. It localises to the secretory vesicle. It is found in the acrosome. Involved in sperm capacitation and acrosome reaction. This chain is IQ domain-containing protein F1, found in Mus musculus (Mouse).